Reading from the N-terminus, the 142-residue chain is Large ribosomal subunit protein uL22c (142 aa).

Belongs to the universal ribosomal protein uL22 family. As to quaternary structure, part of the 50S ribosomal subunit.

The protein resides in the plastid. Its subcellular location is the chloroplast. Its function is as follows. This protein binds specifically to 23S rRNA. Functionally, the globular domain of the protein is located near the polypeptide exit tunnel on the outside of the subunit, while an extended beta-hairpin is found that lines the wall of the exit tunnel in the center of the 70S ribosome. This chain is Large ribosomal subunit protein uL22c (rpl22), found in Pinus thunbergii (Japanese black pine).